The primary structure comprises 150 residues: uncharacterized protein (150 aa).

It belongs to the aspartate/glutamate racemases family.

This is an uncharacterized protein from Pectobacterium carotovorum subsp. carotovorum (Erwinia carotovora subsp. carotovora).